The chain runs to 698 residues: MRVGGRFEVISPHEPAGDQPAAIDELQRRILAGERDVVLLGATGTGKSATTAWLIERLQRPTLVMAPNKTLAAQLANELRGMLPHNAVEYFVSYYDYYQPEAYIAQTDTYIEKDSSINDDVERLRHSATSSLLSRRDVVVVASVSCIYGLGTPQSYLDRSVELAVSNEVPRDGLLRLLVDVQYTRNDLSFTRGSFRVRGDTVEIIPSYEELAVRIEFFGDEIEALYYLHPLTGEVIRQVDSLRIFPATHYVAGPERMAQAISAIEEELAERLAEFERQGKLLEAQRLRMRTNYDIEMMRQVGFCSGIENYSRHIDGRGPGTPPATLLDYFPEDFLLVIDESHVTVPQIGGMYEGDMSRKRNLVEYGFRLPSACDNRPLTWEEFADRIGQTVYLSATPGPYELSQSGGEFVEQVIRPTGLVDPKVVVKPTKGQIDDLIGEIRKRANADQRVLVTTLTKKMAEDLTDYLLEMGIRVRYLHSEVDTLRRVELLRQLRLGDYDVLVGINLLREGLDLPEVSLVAILDADKEGFLRSARSLIQTIGRAARNVSGEVHMYADTITDSMTEAIDETERRRAKQIAYNNANGIDPQPLRKKIADILDQVYREADDTDTVQVGGSGRNVSRGRRAQSEPVRSVSVGVFEGRDTAGMPRAELADLIKDLTAQMMAAASDLQFELAARFRDEIADLKKELRGMDAAGLK.

In terms of domain architecture, Helicase ATP-binding spans arginine 28–isoleucine 414. Glycine 41 to serine 48 is a binding site for ATP. Positions tyrosine 94–isoleucine 117 match the Beta-hairpin motif. The Helicase C-terminal domain maps to glutamine 432–leucine 598. Residues aspartate 609–glutamate 629 form a disordered region. Residues alanine 653–glutamate 688 enclose the UVR domain.

It belongs to the UvrB family. In terms of assembly, forms a heterotetramer with UvrA during the search for lesions. Interacts with UvrC in an incision complex.

The protein resides in the cytoplasm. Its function is as follows. The UvrABC repair system catalyzes the recognition and processing of DNA lesions. A damage recognition complex composed of 2 UvrA and 2 UvrB subunits scans DNA for abnormalities. Upon binding of the UvrA(2)B(2) complex to a putative damaged site, the DNA wraps around one UvrB monomer. DNA wrap is dependent on ATP binding by UvrB and probably causes local melting of the DNA helix, facilitating insertion of UvrB beta-hairpin between the DNA strands. Then UvrB probes one DNA strand for the presence of a lesion. If a lesion is found the UvrA subunits dissociate and the UvrB-DNA preincision complex is formed. This complex is subsequently bound by UvrC and the second UvrB is released. If no lesion is found, the DNA wraps around the other UvrB subunit that will check the other stand for damage. The protein is UvrABC system protein B of Mycobacterium leprae (strain TN).